The sequence spans 307 residues: Ribosomal protein L11 methyltransferase (307 aa).

Positions 162, 183, 205, and 244 each coordinate S-adenosyl-L-methionine.

It belongs to the methyltransferase superfamily. PrmA family.

The protein localises to the cytoplasm. The enzyme catalyses L-lysyl-[protein] + 3 S-adenosyl-L-methionine = N(6),N(6),N(6)-trimethyl-L-lysyl-[protein] + 3 S-adenosyl-L-homocysteine + 3 H(+). Methylates ribosomal protein L11. The sequence is that of Ribosomal protein L11 methyltransferase from Bordetella parapertussis (strain 12822 / ATCC BAA-587 / NCTC 13253).